The sequence spans 250 residues: Menaquinol:cytochrome c reductase cytochrome c subunit (250 aa).

3 helical membrane passes run 46-62 (WLVG…LTVA), 104-124 (VIGA…APFL), and 137-157 (VATG…WESV). The 73-residue stretch at 178 to 250 (DTNAEGYKIA…LQKMANSSPA (73 aa)) folds into the Cytochrome c domain. Residues Cys192, Cys195, and His196 each contribute to the heme c site. The segment at 229–250 (MPGGIFKGTDEELQKMANSSPA) is disordered.

The protein belongs to the cytochrome b family. In terms of assembly, the main subunits of the menaquinol:cytochrome c complex are a Rieske-type iron-sulfur protein (QcrA), a cytochrome b (QcrB) and a cytochrome c (QcrC). The cofactor is heme c.

It localises to the cell membrane. Component of the menaquinol:cytochrome c reductase complex. This chain is Menaquinol:cytochrome c reductase cytochrome c subunit (qcrC), found in Geobacillus thermodenitrificans.